We begin with the raw amino-acid sequence, 334 residues long: Beta-hexosaminidase (334 aa).

Substrate-binding positions include Asp62, Arg70, Arg131, and 161–162; that span reads KH. His174 functions as the Proton donor/acceptor in the catalytic mechanism. Asp246 serves as the catalytic Nucleophile.

The protein belongs to the glycosyl hydrolase 3 family. NagZ subfamily.

Its subcellular location is the cytoplasm. The catalysed reaction is Hydrolysis of terminal non-reducing N-acetyl-D-hexosamine residues in N-acetyl-beta-D-hexosaminides.. It participates in cell wall biogenesis; peptidoglycan recycling. Functionally, plays a role in peptidoglycan recycling by cleaving the terminal beta-1,4-linked N-acetylglucosamine (GlcNAc) from peptide-linked peptidoglycan fragments, giving rise to free GlcNAc, anhydro-N-acetylmuramic acid and anhydro-N-acetylmuramic acid-linked peptides. The chain is Beta-hexosaminidase from Tolumonas auensis (strain DSM 9187 / NBRC 110442 / TA 4).